The following is a 508-amino-acid chain: MAKKALISVSKKEGIVEFAKKLNELGYEIISTGGTYNLLKENRVNVVKVSDITGFPEIMDGRVKTLHPKIHGGLLAIRDNEEHIKALKEHGIEPIDIVVINLYPFKETILKENVTLEEAIENIDIGGPSMIRAAAKNYKYVTILVDPKDYDTVIEEIKQYGNTKEETRFYLAAKAFGHTALYDSLIYNYLIQKNNIEFPEVMAFAYEKAQDMRYGENPHQKAAFYKNPIKAYGIAECEQLHGKELSFNNINDANAAIELLREFKEPAAVAVKHTNPCGVAIADNIYNAYLKAYESDPVSIFGGIVALNRTVDVKTAEELIKIFLEIVIAPDFEEEAFEILKKKKNLRILRLKEGYEKEYDLKKVEGGLLVQEKDEIDLDENNLKVVTKKAPTQKEMEDLRFAWKVVKHVKSNAIVLAKDGATVGIGVGQVNRIWPTEQAIKQAGSKAKGSVLASDAFFPFPDVVEAAVKGGITAIIQPGGSQNDALSIEAADKGGVSMIFTGIRHFKH.

Positions 1-145 (MAKKALISVS…KNYKYVTILV (145 aa)) constitute an MGS-like domain.

It belongs to the PurH family.

It catalyses the reaction (6R)-10-formyltetrahydrofolate + 5-amino-1-(5-phospho-beta-D-ribosyl)imidazole-4-carboxamide = 5-formamido-1-(5-phospho-D-ribosyl)imidazole-4-carboxamide + (6S)-5,6,7,8-tetrahydrofolate. The catalysed reaction is IMP + H2O = 5-formamido-1-(5-phospho-D-ribosyl)imidazole-4-carboxamide. Its pathway is purine metabolism; IMP biosynthesis via de novo pathway; 5-formamido-1-(5-phospho-D-ribosyl)imidazole-4-carboxamide from 5-amino-1-(5-phospho-D-ribosyl)imidazole-4-carboxamide (10-formyl THF route): step 1/1. It participates in purine metabolism; IMP biosynthesis via de novo pathway; IMP from 5-formamido-1-(5-phospho-D-ribosyl)imidazole-4-carboxamide: step 1/1. The sequence is that of Bifunctional purine biosynthesis protein PurH from Thermoanaerobacter sp. (strain X514).